A 370-amino-acid polypeptide reads, in one-letter code: Aminomethyltransferase (370 aa).

It belongs to the GcvT family. As to quaternary structure, the glycine cleavage system is composed of four proteins: P, T, L and H.

It catalyses the reaction N(6)-[(R)-S(8)-aminomethyldihydrolipoyl]-L-lysyl-[protein] + (6S)-5,6,7,8-tetrahydrofolate = N(6)-[(R)-dihydrolipoyl]-L-lysyl-[protein] + (6R)-5,10-methylene-5,6,7,8-tetrahydrofolate + NH4(+). The glycine cleavage system catalyzes the degradation of glycine. In Prochlorococcus marinus (strain MIT 9215), this protein is Aminomethyltransferase.